Here is a 105-residue protein sequence, read N- to C-terminus: Small ribosomal subunit protein uS10 (105 aa).

This sequence belongs to the universal ribosomal protein uS10 family. In terms of assembly, part of the 30S ribosomal subunit.

Involved in the binding of tRNA to the ribosomes. The polypeptide is Small ribosomal subunit protein uS10 (Nitratidesulfovibrio vulgaris (strain DSM 19637 / Miyazaki F) (Desulfovibrio vulgaris)).